The chain runs to 418 residues: uncharacterized protein (418 aa).

It belongs to the poxviruses C4/C10 family.

This is an uncharacterized protein from Fowlpox virus (strain NVSL) (FPV).